Here is a 205-residue protein sequence, read N- to C-terminus: Large ribosomal subunit protein uL3c (205 aa).

A disordered region spans residues 127 to 153 (HFSRGPMSHGSKNHRQPGSIGAGTTPG).

This sequence belongs to the universal ribosomal protein uL3 family. In terms of assembly, part of the 50S ribosomal subunit.

The protein resides in the plastid. The protein localises to the chloroplast. Functionally, one of the primary rRNA binding proteins, it binds directly near the 3'-end of the 23S rRNA, where it nucleates assembly of the 50S subunit. The chain is Large ribosomal subunit protein uL3c (rpl3) from Porphyra purpurea (Red seaweed).